The chain runs to 528 residues: Phosphoenolpyruvate carboxykinase (ATP) (528 aa).

The substrate site is built by arginine 56, tyrosine 192, and lysine 198. Residues lysine 198, histidine 217, and 233–241 contribute to the ATP site; that span reads GLSGTGKTT. Mn(2+) contacts are provided by lysine 198 and histidine 217. Position 254 (aspartate 254) interacts with Mn(2+). Positions 282, 319, and 444 each coordinate ATP. Arginine 319 contributes to the substrate binding site.

Belongs to the phosphoenolpyruvate carboxykinase (ATP) family. Requires Mn(2+) as cofactor.

The protein localises to the cytoplasm. It catalyses the reaction oxaloacetate + ATP = phosphoenolpyruvate + ADP + CO2. It participates in carbohydrate biosynthesis; gluconeogenesis. Involved in the gluconeogenesis. Catalyzes the conversion of oxaloacetate (OAA) to phosphoenolpyruvate (PEP) through direct phosphoryl transfer between the nucleoside triphosphate and OAA. In Bacillus cereus (strain ATCC 10987 / NRS 248), this protein is Phosphoenolpyruvate carboxykinase (ATP).